A 190-amino-acid polypeptide reads, in one-letter code: Potassium-transporting ATPase KdpC subunit (190 aa).

The helical transmembrane segment at 10-30 threads the bilayer; the sequence is TFLFLLLITGGVYPLLTTALG.

Belongs to the KdpC family. As to quaternary structure, the system is composed of three essential subunits: KdpA, KdpB and KdpC.

It localises to the cell inner membrane. Functionally, part of the high-affinity ATP-driven potassium transport (or Kdp) system, which catalyzes the hydrolysis of ATP coupled with the electrogenic transport of potassium into the cytoplasm. This subunit acts as a catalytic chaperone that increases the ATP-binding affinity of the ATP-hydrolyzing subunit KdpB by the formation of a transient KdpB/KdpC/ATP ternary complex. This is Potassium-transporting ATPase KdpC subunit from Escherichia coli O7:K1 (strain IAI39 / ExPEC).